The following is a 246-amino-acid chain: Pyridoxine 5'-phosphate synthase (246 aa).

Asparagine 12 serves as a coordination point for 3-amino-2-oxopropyl phosphate. 14–15 (DH) lines the 1-deoxy-D-xylulose 5-phosphate pocket. A 3-amino-2-oxopropyl phosphate-binding site is contributed by arginine 23. The active-site Proton acceptor is the histidine 48. 1-deoxy-D-xylulose 5-phosphate contacts are provided by arginine 50 and histidine 55. Residue glutamate 75 is the Proton acceptor of the active site. Threonine 105 is a 1-deoxy-D-xylulose 5-phosphate binding site. The Proton donor role is filled by histidine 196. 3-amino-2-oxopropyl phosphate is bound by residues glycine 197 and 218–219 (GH).

This sequence belongs to the PNP synthase family. As to quaternary structure, homooctamer; tetramer of dimers.

It localises to the cytoplasm. It carries out the reaction 3-amino-2-oxopropyl phosphate + 1-deoxy-D-xylulose 5-phosphate = pyridoxine 5'-phosphate + phosphate + 2 H2O + H(+). The protein operates within cofactor biosynthesis; pyridoxine 5'-phosphate biosynthesis; pyridoxine 5'-phosphate from D-erythrose 4-phosphate: step 5/5. Functionally, catalyzes the complicated ring closure reaction between the two acyclic compounds 1-deoxy-D-xylulose-5-phosphate (DXP) and 3-amino-2-oxopropyl phosphate (1-amino-acetone-3-phosphate or AAP) to form pyridoxine 5'-phosphate (PNP) and inorganic phosphate. The polypeptide is Pyridoxine 5'-phosphate synthase (Pseudomonas syringae pv. tomato (strain ATCC BAA-871 / DC3000)).